The chain runs to 89 residues: Small ribosomal subunit protein uS15 (89 aa).

The protein belongs to the universal ribosomal protein uS15 family. As to quaternary structure, part of the 30S ribosomal subunit. Forms a bridge to the 50S subunit in the 70S ribosome, contacting the 23S rRNA.

One of the primary rRNA binding proteins, it binds directly to 16S rRNA where it helps nucleate assembly of the platform of the 30S subunit by binding and bridging several RNA helices of the 16S rRNA. Functionally, forms an intersubunit bridge (bridge B4) with the 23S rRNA of the 50S subunit in the ribosome. This Streptococcus gordonii (strain Challis / ATCC 35105 / BCRC 15272 / CH1 / DL1 / V288) protein is Small ribosomal subunit protein uS15.